The sequence spans 327 residues: tRNA dimethylallyltransferase (327 aa).

14–21 serves as a coordination point for ATP; the sequence is GPTASGKT. 16-21 serves as a coordination point for substrate; that stretch reads TASGKT. 2 interaction with substrate tRNA regions span residues 39–42 and 163–167; these read DSAL and QRIQR.

The protein belongs to the IPP transferase family. In terms of assembly, monomer. The cofactor is Mg(2+).

It carries out the reaction adenosine(37) in tRNA + dimethylallyl diphosphate = N(6)-dimethylallyladenosine(37) in tRNA + diphosphate. Catalyzes the transfer of a dimethylallyl group onto the adenine at position 37 in tRNAs that read codons beginning with uridine, leading to the formation of N6-(dimethylallyl)adenosine (i(6)A). The chain is tRNA dimethylallyltransferase from Xanthomonas oryzae pv. oryzae (strain MAFF 311018).